Here is a 397-residue protein sequence, read N- to C-terminus: Lysophospholipid transporter LplT (397 aa).

Over 1–17 the chain is Periplasmic; that stretch reads MSESVHTNTSLWSKGMK. The chain crosses the membrane as a helical span at residues 18–38; the sequence is AVIVAQFLSAFGDNALLFATL. The Cytoplasmic portion of the chain corresponds to 39–52; the sequence is ALLKAQFYPEWSQP. Residues 53 to 73 form a helical membrane-spanning segment; sequence ILQMVFVGAYILFAPFVGQVA. At 74–90 the chain is on the periplasmic side; the sequence is DSFAKGRVMMFANGLKL. The helical transmembrane segment at 91 to 111 threads the bilayer; sequence LGAASICFGINPFLGYTLVGV. Residues 112–144 are Cytoplasmic-facing; it reads GAAAYSPAKYGILGELTTGSKLVKANGLMEAST. The chain crosses the membrane as a helical span at residues 145-165; sequence IAAILLGSVAGGVLADWHVLV. A topological domain (periplasmic) is located at residue A166. A helical transmembrane segment spans residues 167–187; the sequence is LAACALAYGGAVVANIYIPKL. The Cytoplasmic portion of the chain corresponds to 188 to 226; it reads AAARPGQSWNLINMTRSFLNACTSLWCNGETRFSLVGTS. A helical membrane pass occupies residues 227-247; the sequence is LFWGAGVTLRFLLVLWVPVAL. The Periplasmic segment spans residues 248 to 256; the sequence is GITDNATPT. The chain crosses the membrane as a helical span at residues 257–277; the sequence is YLNAMVAIGIVVGAGAAAKLV. Topologically, residues 278–280 are cytoplasmic; sequence TLE. Residues 281 to 301 traverse the membrane as a helical segment; the sequence is TVSRCMPAGILIGVVVLIFSL. Topologically, residues 302-304 are periplasmic; the sequence is QHE. The chain crosses the membrane as a helical span at residues 305-325; that stretch reads LLPAYALLMLIGVLGGFFVVP. Topologically, residues 326–343 are cytoplasmic; it reads LNALLQERGKKSVGAGNA. A helical transmembrane segment spans residues 344-364; that stretch reads IAVQNLGENSAMLLMLGIYSL. Over 365-366 the chain is Periplasmic; sequence AV. The chain crosses the membrane as a helical span at residues 367–387; it reads MVGIPVVPIGIGFGALFALAI. The Cytoplasmic portion of the chain corresponds to 388-397; it reads TALWIWQRRH.

This sequence belongs to the major facilitator superfamily. LplT (TC 2.A.1.42) family.

The protein localises to the cell inner membrane. In terms of biological role, catalyzes the facilitated diffusion of 2-acyl-glycero-3-phosphoethanolamine (2-acyl-GPE) into the cell. The chain is Lysophospholipid transporter LplT from Shigella dysenteriae serotype 1 (strain Sd197).